The following is an 815-amino-acid chain: MDIDQIEFKTNVFVLALRDVVVFPGMVVPLFVGRPKSMNALNAAMKEDKQIFLVTQKNATEETPTIDNLYQTGVMANILQLLKLPDGTLKVLVEGVKRFELLALNDEENFLTGDIQQVESDEQLDNDGVVLVRTIQERFQDYAALKKKIPSEVLKSVQKITDPNRLVDTISANLKLGIEEKQTLLEILTINDRLEHILKTIETEIDLLESEQRINSRVKKKMDQTQRNFYLNTKLQAIHEELGDSSEDGVSEFTRLKEQIEQAGMTKDALKVAEDELKKLKMMSPQSPEANIIRTYIEWLVSIPWKKRSRVSKDLNKAQTILDKQHYGLEKVKERIIEYLAVQKRVNKMKGPILCLVGPPGVGKTSLARSIAEATNRKYVRMSLGGVRDEAEIRGHRKTYLGALPGRVIQKMKTAGTRNPLFLLDEIDKMARDLRGDPASALLEVLDPEQNKAFNDHYLEVDYDLSDVMFVATSNSMDIPEALLDRMEIIDLAGYTENEKLNIATQHLLPREIKEHGLKQGELEVPSDTILKIIQTYTREAGVRLLDQSLAKICRKSLKEIVTNEAKAPITVTPDTLDKYLGVAKYRFGLADETNQIGQVAGLAWTRVGGDLLRIEATAMPGKGKNTSTGQLGSVMQESTQAAMSVIRSRSKELGLPDDFYEKQDVHLHFPEGAIKKDGPSAGIAICTAIASVLTQIPVRSDVAMTGEITLRGEVLPIGGLKEKLLAAARGGIKTVLIPYENVRDLAEISDEVKEGLDIHPVQWIDEVFKIALESFPNVENDEISAISMKDAEMGKLVANKQSTKEIQKKSPKRH.

Residues 12–205 (VFVLALRDVV…HILKTIETEI (194 aa)) form the Lon N-terminal domain. 358–365 (GPPGVGKT) is an ATP binding site. The 182-residue stretch at 594–775 (TNQIGQVAGL…DEVFKIALES (182 aa)) folds into the Lon proteolytic domain. Active-site residues include Ser-681 and Lys-724.

The protein belongs to the peptidase S16 family. As to quaternary structure, homohexamer. Organized in a ring with a central cavity.

The protein localises to the cytoplasm. The catalysed reaction is Hydrolysis of proteins in presence of ATP.. Functionally, ATP-dependent serine protease that mediates the selective degradation of mutant and abnormal proteins as well as certain short-lived regulatory proteins. Required for cellular homeostasis and for survival from DNA damage and developmental changes induced by stress. Degrades polypeptides processively to yield small peptide fragments that are 5 to 10 amino acids long. Binds to DNA in a double-stranded, site-specific manner. The polypeptide is Lon protease 1 (Hydrogenovibrio crunogenus (strain DSM 25203 / XCL-2) (Thiomicrospira crunogena)).